The primary structure comprises 211 residues: Probable nicotinate-nucleotide adenylyltransferase (211 aa).

This sequence belongs to the NadD family.

It carries out the reaction nicotinate beta-D-ribonucleotide + ATP + H(+) = deamido-NAD(+) + diphosphate. The protein operates within cofactor biosynthesis; NAD(+) biosynthesis; deamido-NAD(+) from nicotinate D-ribonucleotide: step 1/1. In terms of biological role, catalyzes the reversible adenylation of nicotinate mononucleotide (NaMN) to nicotinic acid adenine dinucleotide (NaAD). The chain is Probable nicotinate-nucleotide adenylyltransferase from Legionella pneumophila (strain Paris).